Reading from the N-terminus, the 695-residue chain is Probable serine/threonine-protein kinase abkD (695 aa).

The segment covering 105–119 (TTKPQPCQAKPPSSK) has biased composition (polar residues). A disordered region spans residues 105–149 (TTKPQPCQAKPPSSKQQQQQQQQQQQQQQQQQQQQSKKKTSKDRL). Residues 118–150 (SKQQQQQQQQQQQQQQQQQQQQSKKKTSKDRLR) adopt a coiled-coil conformation. Positions 120–139 (QQQQQQQQQQQQQQQQQQQQ) are enriched in low complexity. A helical membrane pass occupies residues 177–193 (TIASILAAIALIIYSYE). A Protein kinase domain is found at 317–695 (DFDRLPIAAA…LIKDQMKKLG (379 aa)). Residues 323 to 331 (IAAASLAQV) and Lys345 each bind ATP. The active-site Proton acceptor is Asp477.

It belongs to the protein kinase superfamily. ADCK protein kinase family.

Its subcellular location is the membrane. This Dictyostelium discoideum (Social amoeba) protein is Probable serine/threonine-protein kinase abkD (abkD).